Here is a 206-residue protein sequence, read N- to C-terminus: Large ribosomal subunit protein uL4 (206 aa).

The interval 63–97 (MYKQKGTGRARHHSARAPQFRGGGKAHGPVVRSHE) is disordered. A compositionally biased stretch (basic residues) spans 64-77 (YKQKGTGRARHHSA).

This sequence belongs to the universal ribosomal protein uL4 family. Part of the 50S ribosomal subunit.

In terms of biological role, one of the primary rRNA binding proteins, this protein initially binds near the 5'-end of the 23S rRNA. It is important during the early stages of 50S assembly. It makes multiple contacts with different domains of the 23S rRNA in the assembled 50S subunit and ribosome. Functionally, forms part of the polypeptide exit tunnel. In Rhizobium leguminosarum bv. trifolii (strain WSM2304), this protein is Large ribosomal subunit protein uL4.